The sequence spans 881 residues: MEARIDEGGEAQQFYGSVGKRSVEWDLNDWKWDGDLFLATQTTRGRQFFPLGNSSNSSSSCSDEGNDKKRRAVAIQGDTNGALTLNLNGESDGLFPAKKTKSGAVCQVENCEADLSKVKDYHRRHKVCEMHSKATSATVGGILQRFCQQCSRFHLLQEFDEGKRSCRRRLAGHNKRRRKTNPEPGANGNPSDDHSSNYLLITLLKILSNMHNHTGDQDLMSHLLKSLVSHAGEQLGKNLVELLLQGGGSQGSLNIGNSALLGIEQAPQEELKQFSARQDGTATENRSEKQVKMNDFDLNDIYIDSDDTDVERSPPPTNPATSSLDYPSWIHQSSPPQTSRNSDSASDQSPSSSSEDAQMRTGRIVFKLFGKEPNEFPIVLRGQILDWLSHSPTDMESYIRPGCIVLTIYLRQAETAWEELSDDLGFSLGKLLDLSDDPLWTTGWIYVRVQNQLAFVYNGQVVVDTSLSLKSRDYSHIISVKPLAIAATEKAQFTVKGMNLRQRGTRLLCSVEGKYLIQETTHDSTTREDDDFKDNSEIVECVNFSCDMPILSGRGFMEIEDQGLSSSFFPFLVVEDDDVCSEIRILETTLEFTGTDSAKQAMDFIHEIGWLLHRSKLGESDPNPGVFPLIRFQWLIEFSMDREWCAVIRKLLNMFFDGAVGEFSSSSNATLSELCLLHRAVRKNSKPMVEMLLRYIPKQQRNSLFRPDAAGPAGLTPLHIAAGKDGSEDVLDALTEDPAMVGIEAWKTCRDSTGFTPEDYARLRGHFSYIHLIQRKINKKSTTEDHVVVNIPVSFSDREQKEPKSGPMASALEITQIPCKLCDHKLVYGTTRRSVAYRPAMLSMVAIAAVCVCVALLFKSCPEVLYVFQPFRWELLDYGTS.

The disordered stretch occupies residues 49 to 69 (FPLGNSSNSSSSCSDEGNDKK). Low complexity predominate over residues 53 to 62 (NSSNSSSSCS). A sufficient and necessary for DNA binding region spans residues 96–187 (PAKKTKSGAV…RKTNPEPGAN (92 aa)). The SBP-type zinc-finger motif lies at 103 to 180 (GAVCQVENCE…AGHNKRRRKT (78 aa)). Positions 106, 111, 128, 131, 147, 150, 154, and 166 each coordinate Zn(2+). A Bipartite nuclear localization signal motif is present at residues 163–179 (KRSCRRRLAGHNKRRRK). Residues 170 to 179 (LAGHNKRRRK) show a composition bias toward basic residues. Disordered stretches follow at residues 170-193 (LAGH…PSDD) and 274-358 (FSAR…EDAQ). Residues 275–284 (SARQDGTATE) show a composition bias toward polar residues. Over residues 285 to 295 (NRSEKQVKMND) the composition is skewed to basic and acidic residues. Residues 319-338 (PATSSLDYPSWIHQSSPPQT) are compositionally biased toward polar residues. A compositionally biased stretch (low complexity) spans 339-356 (SRNSDSASDQSPSSSSED).

Zn(2+) serves as cofactor.

The protein localises to the nucleus. Trans-acting factor that binds specifically to the consensus nucleotide sequence 5'-TNCGTACAA-3' of AP1 promoter. Binds specifically to the 5'-GTAC-3' core sequence. The protein is Squamosa promoter-binding-like protein 1 (SPL1) of Arabidopsis thaliana (Mouse-ear cress).